The chain runs to 88 residues: UPF0298 protein BcerKBAB4_3759 (88 aa).

This sequence belongs to the UPF0298 family.

Its subcellular location is the cytoplasm. The chain is UPF0298 protein BcerKBAB4_3759 from Bacillus mycoides (strain KBAB4) (Bacillus weihenstephanensis).